Reading from the N-terminus, the 910-residue chain is Protein translocase subunit SecA 1 (910 aa).

ATP-binding positions include glutamine 86, 104–108, and aspartate 512; that span reads GEGKT. Zn(2+) is bound by residues cysteine 894, cysteine 896, cysteine 905, and histidine 906.

It belongs to the SecA family. Monomer and homodimer. Part of the essential Sec protein translocation apparatus which comprises SecA, SecYEG and auxiliary proteins SecDF-YajC and YidC. Requires Zn(2+) as cofactor.

It is found in the cell inner membrane. It localises to the cytoplasm. The catalysed reaction is ATP + H2O + cellular proteinSide 1 = ADP + phosphate + cellular proteinSide 2.. Part of the Sec protein translocase complex. Interacts with the SecYEG preprotein conducting channel. Has a central role in coupling the hydrolysis of ATP to the transfer of proteins into and across the cell membrane, serving both as a receptor for the preprotein-SecB complex and as an ATP-driven molecular motor driving the stepwise translocation of polypeptide chains across the membrane. This is Protein translocase subunit SecA 1 from Bordetella avium (strain 197N).